Here is an 807-residue protein sequence, read N- to C-terminus: Zinc finger protein 594 (807 aa).

A disordered region spans residues methionine 1 to lysine 23. C2H2-type zinc fingers lie at residues tyrosine 127–histidine 149, tyrosine 155–histidine 177, tyrosine 183–histidine 205, tyrosine 211–histidine 233, tyrosine 239–histidine 261, tyrosine 267–histidine 289, leucine 295–histidine 317, and tyrosine 323–histidine 345. The C2H2-type 9; degenerate zinc-finger motif lies at glutamate 348–histidine 370. 6 consecutive C2H2-type zinc fingers follow at residues tyrosine 376 to histidine 398, tyrosine 404 to histidine 426, cysteine 432 to histidine 454, tyrosine 460 to histidine 482, tyrosine 488 to histidine 510, and tyrosine 516 to histidine 538. The segment at leucine 543 to histidine 562 adopts a C2H2-type 16; degenerate zinc-finger fold. C2H2-type zinc fingers lie at residues tyrosine 568 to histidine 590, tyrosine 596 to histidine 618, tyrosine 624 to histidine 646, tyrosine 652 to histidine 674, tyrosine 680 to histidine 702, and tyrosine 708 to histidine 730. A C2H2-type 23; degenerate zinc finger spans residues glutamate 733–histidine 755. The C2H2-type 24 zinc finger occupies tyrosine 761–histidine 783.

It belongs to the krueppel C2H2-type zinc-finger protein family.

It localises to the nucleus. In terms of biological role, may be involved in transcriptional regulation. This is Zinc finger protein 594 (ZNF594) from Homo sapiens (Human).